The primary structure comprises 258 residues: MLEQILATKREEVETLTLPAPLPERKRRPFAAALRRPRRMLGLIAEVKKASPSKGIIRPDFDPVAIAKAYERAGADAISVLTDERYFQGHRRYLRAVKEAVNVPVLRKDFIIDRRQVEESVRLGADAILLIGEALPPETLEELYHEAYSLGLECLVEVHAKETLERIFDRFTPEIVGINNRDLHTFVTTLEATKTLAPLIPPSCVIVSESGIGSFNDVKTVKSYGAQAMLVGESLMRQDDVERAVYRLFGEEDGDDSN.

Belongs to the TrpC family.

It carries out the reaction 1-(2-carboxyphenylamino)-1-deoxy-D-ribulose 5-phosphate + H(+) = (1S,2R)-1-C-(indol-3-yl)glycerol 3-phosphate + CO2 + H2O. The protein operates within amino-acid biosynthesis; L-tryptophan biosynthesis; L-tryptophan from chorismate: step 4/5. This chain is Indole-3-glycerol phosphate synthase, found in Geobacillus kaustophilus (strain HTA426).